We begin with the raw amino-acid sequence, 225 residues long: MEKLLWCSLVMIGFSQAFAQKDMSKTAFVFPKESANSYVSLEAQSKKTLKAFTVCLHIFTELSTTRSFSIFSYATKNSPNEILIFWSKDRGYAFGVGGPEVLFKASEIPEVPTHICASWESATGIAELWVDGKPKVRKILQKGYTVGTDASIILGQEQDSYGGGFDANQSLVGDIGDVNMWDIVLSPEQINTVCVGGTLDPSVLNWQALKYKVQGDVFIKPQLWP.

A signal peptide spans Met-1–Ala-19. Gln-20 is subject to Pyrrolidone carboxylic acid. Residues Ser-24 to Pro-225 form the Pentraxin (PTX) domain. The cysteines at positions 55 and 116 are disulfide-linked. Ca(2+) contacts are provided by Asn-80, Glu-157, Gln-158, Asp-159, and Gln-169.

It belongs to the pentraxin family. As to quaternary structure, homopentamer. Pentraxin (or pentaxin) have a discoid arrangement of 5 non-covalently bound subunits. Interacts with FCN1; may regulate monocyte activation by FCN1. The cofactor is Ca(2+). As to expression, found in plasma.

The protein localises to the secreted. Displays several functions associated with host defense: it promotes agglutination, bacterial capsular swelling, phagocytosis and complement fixation through its calcium-dependent binding to phosphorylcholine. Can interact with DNA and histones and may scavenge nuclear material released from damaged circulating cells. In Mesocricetus auratus (Golden hamster), this protein is C-reactive protein (CRP).